The sequence spans 613 residues: Phostensin (613 aa).

Positions 15 to 33 are enriched in basic and acidic residues; the sequence is RRQEEASVRGREKAERERL. Disordered regions lie at residues 15–231 and 266–505; these read RRQE…SAYQ and GEER…GKKR. Serine 54, serine 125, serine 133, serine 175, and serine 195 each carry phosphoserine. 2 stretches are compositionally biased toward basic and acidic residues: residues 104–154 and 167–191; these read RSEE…ERRL and LEAR…EPWK. Position 199 is a phosphothreonine (threonine 199). The segment covering 199 to 221 has biased composition (basic and acidic residues); it reads TPERSLRLAESREQSPRRKEVES. Serine 224 carries the post-translational modification Phosphoserine. Positions 266–282 are enriched in basic and acidic residues; it reads GEERQGYSEKCGRKEEW. Residues 301-310 show a composition bias toward polar residues; the sequence is REAQGSSSTG. Basic and acidic residues-rich tracts occupy residues 314 to 327, 340 to 350, and 357 to 367; these read AEQR…RGMK, KAREWTPRDIE, and EPSESAEKRLE. Serine 368 and serine 432 each carry phosphoserine. Over residues 424–446 the composition is skewed to pro residues; it reads QPPPPAPLSPPPPAPTAPQPPGD. Lysine 457 carries the N6-acetyllysine modification. The segment covering 476 to 499 has biased composition (low complexity); that stretch reads PRRSVPPTTPATPTSPATADAAVP. A phosphoserine mark is found at serine 490 and serine 530. The segment at 552–594 is disordered; it reads QYPSESSVLEELGPEPEVPSAPNPPAAQPDDEEDEEELLLLQP. A compositionally biased stretch (pro residues) spans 567-578; the sequence is PEVPSAPNPPAA. Over residues 580-589 the composition is skewed to acidic residues; it reads PDDEEDEEEL.

As to quaternary structure, interacts with Protein phosphatase 1 (PP1).

It is found in the cytoplasm. The protein localises to the cytoskeleton. In terms of biological role, may target protein phosphatase 1 to F-actin cytoskeleton. The sequence is that of Phostensin (PPP1R18) from Macaca mulatta (Rhesus macaque).